The following is a 124-amino-acid chain: Small ribosomal subunit protein uS12 (124 aa).

Positions 105-124 are disordered; it reads QGVKNRKQARSRYGAKKEKG. The segment covering 108–118 has biased composition (basic residues); sequence KNRKQARSRYG.

The protein belongs to the universal ribosomal protein uS12 family. Part of the 30S ribosomal subunit. Contacts proteins S8 and S17. May interact with IF1 in the 30S initiation complex.

With S4 and S5 plays an important role in translational accuracy. Its function is as follows. Interacts with and stabilizes bases of the 16S rRNA that are involved in tRNA selection in the A site and with the mRNA backbone. Located at the interface of the 30S and 50S subunits, it traverses the body of the 30S subunit contacting proteins on the other side and probably holding the rRNA structure together. The combined cluster of proteins S8, S12 and S17 appears to hold together the shoulder and platform of the 30S subunit. This is Small ribosomal subunit protein uS12 (rpsL) from Mycobacterium bovis (strain ATCC BAA-935 / AF2122/97).